The primary structure comprises 543 residues: Phenylalanine--tRNA ligase beta subunit (543 aa).

One can recognise a B5 domain in the interval 269 to 344 (FDFRIMRPAR…KSKGIENIEE (76 aa)). Asp-322, Asp-328, Glu-331, and Asp-332 together coordinate Mg(2+).

It belongs to the phenylalanyl-tRNA synthetase beta subunit family. Type 2 subfamily. Tetramer of two alpha and two beta subunits. Mg(2+) is required as a cofactor.

The protein localises to the cytoplasm. It catalyses the reaction tRNA(Phe) + L-phenylalanine + ATP = L-phenylalanyl-tRNA(Phe) + AMP + diphosphate + H(+). The protein is Phenylalanine--tRNA ligase beta subunit of Thermoplasma acidophilum (strain ATCC 25905 / DSM 1728 / JCM 9062 / NBRC 15155 / AMRC-C165).